Here is a 596-residue protein sequence, read N- to C-terminus: Elongation factor 4 (596 aa).

One can recognise a tr-type G domain in the interval 2 to 183 (ENIRNFCIIA…AIIQRIPPPK (182 aa)). GTP is bound by residues 14–19 (DHGKST) and 130–133 (NKID).

The protein belongs to the TRAFAC class translation factor GTPase superfamily. Classic translation factor GTPase family. LepA subfamily.

The protein resides in the cell inner membrane. The enzyme catalyses GTP + H2O = GDP + phosphate + H(+). Functionally, required for accurate and efficient protein synthesis under certain stress conditions. May act as a fidelity factor of the translation reaction, by catalyzing a one-codon backward translocation of tRNAs on improperly translocated ribosomes. Back-translocation proceeds from a post-translocation (POST) complex to a pre-translocation (PRE) complex, thus giving elongation factor G a second chance to translocate the tRNAs correctly. Binds to ribosomes in a GTP-dependent manner. The chain is Elongation factor 4 from Cytophaga hutchinsonii (strain ATCC 33406 / DSM 1761 / CIP 103989 / NBRC 15051 / NCIMB 9469 / D465).